The sequence spans 293 residues: 4-hydroxy-tetrahydrodipicolinate synthase (293 aa).

A pyruvate-binding site is contributed by Thr45. Residue Tyr133 is the Proton donor/acceptor of the active site. Lys161 acts as the Schiff-base intermediate with substrate in catalysis. Ile203 serves as a coordination point for pyruvate.

The protein belongs to the DapA family. In terms of assembly, homotetramer; dimer of dimers.

The protein resides in the cytoplasm. The enzyme catalyses L-aspartate 4-semialdehyde + pyruvate = (2S,4S)-4-hydroxy-2,3,4,5-tetrahydrodipicolinate + H2O + H(+). It functions in the pathway amino-acid biosynthesis; L-lysine biosynthesis via DAP pathway; (S)-tetrahydrodipicolinate from L-aspartate: step 3/4. Catalyzes the condensation of (S)-aspartate-beta-semialdehyde [(S)-ASA] and pyruvate to 4-hydroxy-tetrahydrodipicolinate (HTPA). This Aliivibrio salmonicida (strain LFI1238) (Vibrio salmonicida (strain LFI1238)) protein is 4-hydroxy-tetrahydrodipicolinate synthase.